The chain runs to 546 residues: CTP synthase (546 aa).

Positions 1–266 are amidoligase domain; it reads MAKYYIFITG…DSYVCDRFCI (266 aa). A CTP-binding site is contributed by serine 14. Serine 14 lines the UTP pocket. ATP contacts are provided by residues 15–20 and aspartate 72; that span reads SLGKGI. The Mg(2+) site is built by aspartate 72 and glutamate 140. CTP contacts are provided by residues 147–149, 187–192, and lysine 223; these read DIE and KTKPTQ. UTP contacts are provided by residues 187–192 and lysine 223; that span reads KTKPTQ. The region spanning 291–544 is the Glutamine amidotransferase type-1 domain; sequence NIGIIGKYTE…VKAAFDFKNK (254 aa). Glycine 352 serves as a coordination point for L-glutamine. Residue cysteine 379 is the Nucleophile; for glutamine hydrolysis of the active site. L-glutamine-binding positions include 380 to 383, glutamate 403, and arginine 470; that span reads LGMQ. Residues histidine 517 and glutamate 519 contribute to the active site.

Belongs to the CTP synthase family. Homotetramer.

The enzyme catalyses UTP + L-glutamine + ATP + H2O = CTP + L-glutamate + ADP + phosphate + 2 H(+). The catalysed reaction is L-glutamine + H2O = L-glutamate + NH4(+). It carries out the reaction UTP + NH4(+) + ATP = CTP + ADP + phosphate + 2 H(+). It participates in pyrimidine metabolism; CTP biosynthesis via de novo pathway; CTP from UDP: step 2/2. With respect to regulation, allosterically activated by GTP, when glutamine is the substrate; GTP has no effect on the reaction when ammonia is the substrate. The allosteric effector GTP functions by stabilizing the protein conformation that binds the tetrahedral intermediate(s) formed during glutamine hydrolysis. Inhibited by the product CTP, via allosteric rather than competitive inhibition. Its function is as follows. Catalyzes the ATP-dependent amination of UTP to CTP with either L-glutamine or ammonia as the source of nitrogen. Regulates intracellular CTP levels through interactions with the four ribonucleotide triphosphates. In Wigglesworthia glossinidia brevipalpis, this protein is CTP synthase.